The chain runs to 516 residues: BAR/IMD domain-containing adapter protein 2-like 1 (516 aa).

One can recognise an IMD domain in the interval 1 to 249 (MSRGPEEVNR…MNMIEEIKTP (249 aa)). A coiled-coil region spans residues 115 to 148 (MNATLKRYQAEHRNKLDSLEKSQAELKKIRRKSQ). T248 and T257 each carry phosphothreonine. Phosphoserine occurs at positions 261 and 281. The tract at residues 303–328 (NPATAGQSAEKTNNSTANTGDDPSLQ) is disordered. A Phosphoserine modification is found at S332. One can recognise an SH3 domain in the interval 340-403 (MKKQKVKTIF…PSSYTKLLEE (64 aa)). T413 carries the phosphothreonine modification. Residues S415, S421, and S423 each carry the phosphoserine modification. Positions 454-516 (ADAAKIPSTS…TNDRSAPIIR (63 aa)) are disordered. A compositionally biased stretch (polar residues) spans 474–485 (ATSTSPSDSNGT). The segment at 488 to 516 (PPFLSGENPFATVKLRPTVTNDRSAPIIR) is binds F-actin.

In terms of assembly, interacts with RAC1. Binds to F-actin. Interacts with FASLG. Post-translationally, phosphorylated on tyrosine in response to insulin.

Its subcellular location is the cytoplasm. It is found in the cytoskeleton. In terms of biological role, may function as adapter protein. Involved in the formation of clusters of actin bundles. Plays a role in the reorganization of the actin cytoskeleton in response to bacterial infection. The chain is BAR/IMD domain-containing adapter protein 2-like 1 (Baiap2l1) from Rattus norvegicus (Rat).